The sequence spans 448 residues: MRVSRYFGTDGIRGRVGQGLISADFVLRLGNALGRVLAQGRDTRPMVLIGKDTRISGYMFESALEAGLVAAGADVQLIGPMPTPAIAFLTNTLRADAGVVISASHNPHDDNGIKFFSAMGEKLDDATEAAIEAAIEAPFLTVDSEYLGKVKRTRDAIGRYIEFSKASVPRGFTLRGLKLVLDCAHGATYHIAPMLFRELGAELVAIGVDPDGLNINAGVGSTHLETLAATVRESGADLGIAFDGDGDRVLMTDAQGRTVDGDDLLYVLARAWRASGRLKGTVVGTLMSNYGLEQALGTLGIPFIRAKVGDRYVHQALVESGGVLGGEASGHLLCLDRATTGDGIVSALQVLEVLRHEGLTLSQALLGLHKVPQKTVNVCWSGPARAAVEMPEVRQALVEAQAAVQGRGRVFLRPSGTEPVVRITVEADDVVLMQQTLDRLADVVRDAA.

S104 functions as the Phosphoserine intermediate in the catalytic mechanism. Mg(2+) is bound by residues S104, D243, D245, and D247. Position 104 is a phosphoserine (S104).

This sequence belongs to the phosphohexose mutase family. It depends on Mg(2+) as a cofactor. In terms of processing, activated by phosphorylation.

It catalyses the reaction alpha-D-glucosamine 1-phosphate = D-glucosamine 6-phosphate. Its function is as follows. Catalyzes the conversion of glucosamine-6-phosphate to glucosamine-1-phosphate. This chain is Phosphoglucosamine mutase, found in Xylella fastidiosa (strain 9a5c).